We begin with the raw amino-acid sequence, 122 residues long: Large ribosomal subunit protein uL14 (122 aa).

It belongs to the universal ribosomal protein uL14 family. In terms of assembly, part of the 50S ribosomal subunit. Forms a cluster with proteins L3 and L19. In the 70S ribosome, L14 and L19 interact and together make contacts with the 16S rRNA in bridges B5 and B8.

Functionally, binds to 23S rRNA. Forms part of two intersubunit bridges in the 70S ribosome. This is Large ribosomal subunit protein uL14 from Myxococcus xanthus (strain DK1622).